The following is a 537-amino-acid chain: CTP synthase (537 aa).

The segment at 1–269 (MNQTKYIFVT…DVVALKKLDL (269 aa)) is amidoligase domain. Residue Ser-15 participates in CTP binding. Ser-15 contacts UTP. Residue 16–21 (SLGKGI) participates in ATP binding. An L-glutamine-binding site is contributed by Tyr-56. Residue Asp-73 coordinates ATP. The Mg(2+) site is built by Asp-73 and Glu-143. CTP-binding positions include 150–152 (DIE), 190–195 (KTKPTQ), and Lys-226. UTP contacts are provided by residues 190 to 195 (KTKPTQ) and Lys-226. Residues 295 to 537 (NIGLVGKYVE…VAAAVNAHKK (243 aa)) form the Glutamine amidotransferase type-1 domain. Residue Gly-357 coordinates L-glutamine. Cys-384 acts as the Nucleophile; for glutamine hydrolysis in catalysis. Residues 385–388 (LGMQ), Glu-408, and Arg-465 contribute to the L-glutamine site. Catalysis depends on residues His-510 and Glu-512.

It belongs to the CTP synthase family. As to quaternary structure, homotetramer.

The enzyme catalyses UTP + L-glutamine + ATP + H2O = CTP + L-glutamate + ADP + phosphate + 2 H(+). The catalysed reaction is L-glutamine + H2O = L-glutamate + NH4(+). It carries out the reaction UTP + NH4(+) + ATP = CTP + ADP + phosphate + 2 H(+). Its pathway is pyrimidine metabolism; CTP biosynthesis via de novo pathway; CTP from UDP: step 2/2. With respect to regulation, allosterically activated by GTP, when glutamine is the substrate; GTP has no effect on the reaction when ammonia is the substrate. The allosteric effector GTP functions by stabilizing the protein conformation that binds the tetrahedral intermediate(s) formed during glutamine hydrolysis. Inhibited by the product CTP, via allosteric rather than competitive inhibition. Functionally, catalyzes the ATP-dependent amination of UTP to CTP with either L-glutamine or ammonia as the source of nitrogen. Regulates intracellular CTP levels through interactions with the four ribonucleotide triphosphates. This is CTP synthase from Flavobacterium johnsoniae (strain ATCC 17061 / DSM 2064 / JCM 8514 / BCRC 14874 / CCUG 350202 / NBRC 14942 / NCIMB 11054 / UW101) (Cytophaga johnsonae).